Here is a 130-residue protein sequence, read N- to C-terminus: Fluoride-specific ion channel FluC (130 aa).

4 helical membrane-spanning segments follow: residues 3–23 (LVFL…YFVG), 38–58 (LGTF…GHLA), 67–87 (FGIF…SYGL), and 102–122 (ISYV…GWFL). 2 residues coordinate Na(+): Gly-77 and Thr-80.

The protein belongs to the fluoride channel Fluc/FEX (TC 1.A.43) family.

It localises to the cell inner membrane. It carries out the reaction fluoride(in) = fluoride(out). With respect to regulation, na(+) is not transported, but it plays an essential structural role and its presence is essential for fluoride channel function. Functionally, fluoride-specific ion channel. Important for reducing fluoride concentration in the cell, thus reducing its toxicity. This is Fluoride-specific ion channel FluC from Helicobacter pylori (strain J99 / ATCC 700824) (Campylobacter pylori J99).